A 456-amino-acid polypeptide reads, in one-letter code: Bifunctional protein GlmU (456 aa).

Residues 1 to 229 are pyrophosphorylase; that stretch reads MTKKALSAVI…VMEVEGANNR (229 aa). UDP-N-acetyl-alpha-D-glucosamine-binding positions include 11–14, Lys-25, Gln-76, 81–82, 103–105, Gly-140, Glu-154, Asn-169, and Asn-227; these read LAAG, GT, and YGD. Asp-105 serves as a coordination point for Mg(2+). Asn-227 provides a ligand contact to Mg(2+). Residues 230 to 250 form a linker region; that stretch reads LQLAALERYFQNKQASKLLLE. Residues 251–456 form an N-acetyltransferase region; sequence GVMIYDPARF…QGWQRPIKKK (206 aa). The UDP-N-acetyl-alpha-D-glucosamine site is built by Arg-333 and Lys-351. The active-site Proton acceptor is the His-363. 2 residues coordinate UDP-N-acetyl-alpha-D-glucosamine: Tyr-366 and Asn-377. Residues Ala-380, 386-387, Ser-405, Ala-423, and Arg-440 contribute to the acetyl-CoA site; that span reads NY.

The protein in the N-terminal section; belongs to the N-acetylglucosamine-1-phosphate uridyltransferase family. This sequence in the C-terminal section; belongs to the transferase hexapeptide repeat family. As to quaternary structure, homotrimer. Mg(2+) serves as cofactor.

The protein resides in the cytoplasm. The catalysed reaction is alpha-D-glucosamine 1-phosphate + acetyl-CoA = N-acetyl-alpha-D-glucosamine 1-phosphate + CoA + H(+). It carries out the reaction N-acetyl-alpha-D-glucosamine 1-phosphate + UTP + H(+) = UDP-N-acetyl-alpha-D-glucosamine + diphosphate. It functions in the pathway nucleotide-sugar biosynthesis; UDP-N-acetyl-alpha-D-glucosamine biosynthesis; N-acetyl-alpha-D-glucosamine 1-phosphate from alpha-D-glucosamine 6-phosphate (route II): step 2/2. It participates in nucleotide-sugar biosynthesis; UDP-N-acetyl-alpha-D-glucosamine biosynthesis; UDP-N-acetyl-alpha-D-glucosamine from N-acetyl-alpha-D-glucosamine 1-phosphate: step 1/1. Its pathway is bacterial outer membrane biogenesis; LPS lipid A biosynthesis. Catalyzes the last two sequential reactions in the de novo biosynthetic pathway for UDP-N-acetylglucosamine (UDP-GlcNAc). The C-terminal domain catalyzes the transfer of acetyl group from acetyl coenzyme A to glucosamine-1-phosphate (GlcN-1-P) to produce N-acetylglucosamine-1-phosphate (GlcNAc-1-P), which is converted into UDP-GlcNAc by the transfer of uridine 5-monophosphate (from uridine 5-triphosphate), a reaction catalyzed by the N-terminal domain. In Haemophilus influenzae (strain 86-028NP), this protein is Bifunctional protein GlmU.